Consider the following 109-residue polypeptide: Flagellar hook-basal body complex protein FliE 2 (109 aa).

It belongs to the FliE family.

The protein resides in the bacterial flagellum basal body. This Bradyrhizobium diazoefficiens (strain JCM 10833 / BCRC 13528 / IAM 13628 / NBRC 14792 / USDA 110) protein is Flagellar hook-basal body complex protein FliE 2 (fliE2).